Reading from the N-terminus, the 1031-residue chain is Beta-galactosidase (1031 aa).

Residues Asn-100 and Asp-198 each contribute to the substrate site. Asp-198 is a Na(+) binding site. Positions 412, 414, and 457 each coordinate Mg(2+). Substrate contacts are provided by residues Glu-457 and 533–536; that span reads EYAH. The Proton donor role is filled by Glu-457. Glu-533 serves as the catalytic Nucleophile. Residue Asn-593 coordinates Mg(2+). Na(+) is bound by residues Phe-597 and Asn-600. Substrate is bound by residues Asn-600 and Trp-1005.

The protein belongs to the glycosyl hydrolase 2 family. Homotetramer. It depends on Mg(2+) as a cofactor. Na(+) is required as a cofactor.

It catalyses the reaction Hydrolysis of terminal non-reducing beta-D-galactose residues in beta-D-galactosides.. In Vibrio vulnificus (strain YJ016), this protein is Beta-galactosidase.